Reading from the N-terminus, the 220-residue chain is Ribose-5-phosphate isomerase A (220 aa).

Residues 25 to 28 (TGST), 80 to 83 (DGAD), and 93 to 96 (KGGG) each bind substrate. The active-site Proton acceptor is the glutamate 102. A substrate-binding site is contributed by lysine 120.

The protein belongs to the ribose 5-phosphate isomerase family. In terms of assembly, homodimer.

The enzyme catalyses aldehydo-D-ribose 5-phosphate = D-ribulose 5-phosphate. Its pathway is carbohydrate degradation; pentose phosphate pathway; D-ribose 5-phosphate from D-ribulose 5-phosphate (non-oxidative stage): step 1/1. Its function is as follows. Catalyzes the reversible conversion of ribose-5-phosphate to ribulose 5-phosphate. This Bacillus cereus (strain ZK / E33L) protein is Ribose-5-phosphate isomerase A.